The following is a 308-amino-acid chain: Ribosomal RNA large subunit methyltransferase F (308 aa).

It belongs to the methyltransferase superfamily. METTL16/RlmF family.

It localises to the cytoplasm. It catalyses the reaction adenosine(1618) in 23S rRNA + S-adenosyl-L-methionine = N(6)-methyladenosine(1618) in 23S rRNA + S-adenosyl-L-homocysteine + H(+). In terms of biological role, specifically methylates the adenine in position 1618 of 23S rRNA. The protein is Ribosomal RNA large subunit methyltransferase F of Escherichia coli O17:K52:H18 (strain UMN026 / ExPEC).